The primary structure comprises 468 residues: Midnolin (468 aa).

In terms of domain architecture, Ubiquitin-like spans 31–105 (MSLAIHSTTG…LTLVPTVEAG (75 aa)). Disordered regions lie at residues 182 to 264 (PSIA…RSRK) and 404 to 447 (LRRK…LGLD). Residues 185 to 201 (ASPVSSPCRPVSSAARV) are compositionally biased toward low complexity. Residues 202-213 (PPVPTSPSPASP) are compositionally biased toward pro residues. Composition is skewed to low complexity over residues 237-260 (SPTA…SPAP) and 419-431 (SPSR…DSSS).

Interacts with GCK; the interaction occurs preferentially at low glucose levels. Interacts with the proteasome.

It is found in the nucleus. The protein localises to the nucleolus. Its subcellular location is the cytoplasm. The protein resides in the cytosol. In terms of biological role, facilitates the ubiquitin-independent proteasomal degradation of stimulus-induced transcription factors such as FOSB, EGR1, NR4A1, and IRF4 to the proteasome for degradation. Promotes also the degradation of other substrates such as CBX4. Plays a role in inhibiting the activity of glucokinase GCK and both glucose-induced and basal insulin secretion. In Homo sapiens (Human), this protein is Midnolin (MIDN).